A 349-amino-acid chain; its full sequence is MSEEKQHKRRVHYSGKYPKKFEEKYKELNPEKYKDTIEHVISKGNTPAGMHISIMVKEIIDFLDIKPGQTGFDATLGYGGHTRAMLEKLEGQGHMFATDVDPIESEKTKKRLAEAGFGEDILTIKLQNFCTIDEIAKEVGGFDFILADLGVSSMQIDNPERGFSFKVDGPLDLRLNPNAGISAAERLDNISREELSGMLYENSDEPYCEELAKAITDEIRKGNRIGTTTKLRHIIEQTLDFLPEKDKKDIIKKTCQRTFQALRIDVNHEFEVLYEFMEKLPGALKPGGRAAILTFHSGEDKLVKKALKAGYKAGIYSDYSKDVIRPSAQECAQNGRARSTKMRWAVRAE.

Residues 79 to 81 (GGH), D99, F129, D148, and Q155 contribute to the S-adenosyl-L-methionine site.

Belongs to the methyltransferase superfamily. RsmH family.

The protein localises to the cytoplasm. It carries out the reaction cytidine(1402) in 16S rRNA + S-adenosyl-L-methionine = N(4)-methylcytidine(1402) in 16S rRNA + S-adenosyl-L-homocysteine + H(+). Specifically methylates the N4 position of cytidine in position 1402 (C1402) of 16S rRNA. In Agathobacter rectalis (strain ATCC 33656 / DSM 3377 / JCM 17463 / KCTC 5835 / VPI 0990) (Eubacterium rectale), this protein is Ribosomal RNA small subunit methyltransferase H 1.